The primary structure comprises 236 residues: Purine nucleoside phosphorylase DeoD-type (236 aa).

A purine D-ribonucleoside is bound at residue histidine 5. Phosphate-binding positions include glycine 21, arginine 25, arginine 44, and 88 to 91; that span reads RVGT. A purine D-ribonucleoside-binding positions include 180-182 and 204-205; these read EME and SD. Aspartate 205 serves as the catalytic Proton donor.

This sequence belongs to the PNP/UDP phosphorylase family. In terms of assembly, homohexamer; trimer of homodimers.

It catalyses the reaction a purine D-ribonucleoside + phosphate = a purine nucleobase + alpha-D-ribose 1-phosphate. The enzyme catalyses a purine 2'-deoxy-D-ribonucleoside + phosphate = a purine nucleobase + 2-deoxy-alpha-D-ribose 1-phosphate. In terms of biological role, catalyzes the reversible phosphorolytic breakdown of the N-glycosidic bond in the beta-(deoxy)ribonucleoside molecules, with the formation of the corresponding free purine bases and pentose-1-phosphate. The sequence is that of Purine nucleoside phosphorylase DeoD-type from Shewanella baltica (strain OS223).